A 118-amino-acid chain; its full sequence is Large ribosomal subunit protein bL21c (118 aa).

The protein belongs to the bacterial ribosomal protein bL21 family. As to quaternary structure, part of the 50S ribosomal subunit.

The protein resides in the plastid. It is found in the chloroplast. In terms of biological role, this protein binds to 23S rRNA. This is Large ribosomal subunit protein bL21c from Anthoceros angustus (Hornwort).